The sequence spans 463 residues: Probable ECA polymerase (463 aa).

11 helical membrane passes run 6–26 (FGGLFVVYLISVIFILSLTWM), 39–59 (FSLLYLLTFYFGFPFTCVLVF), 65–85 (VVPVQFLLQAMLSATAFYAIY), 112–132 (ANLTWLLLALIAVATVGIFFL), 154–174 (GVALKRFFYFFIPAMLVVYFL), 180–200 (AWLMFLIGTVAFGMLTYVIVG), 201–221 (GTRANLIIAFALFLFIGIVRG), 222–242 (WITLWMLVAAGAFGIVGMFWL), 340–360 (LVVMGGVLFIPLGAIAVGLVI), 377–397 (YKAAILQAFCFGAVFNIIVLT), and 408–428 (VVFFCLVFGLCLLVAKLLYWL).

This sequence belongs to the WzyE family. As to quaternary structure, probably part of a complex composed of WzxE, WzyE and WzzE.

It localises to the cell inner membrane. The protein operates within bacterial outer membrane biogenesis; enterobacterial common antigen biosynthesis. Its function is as follows. Probably involved in the polymerization of enterobacterial common antigen (ECA) trisaccharide repeat units. The sequence is that of Probable ECA polymerase from Pectobacterium carotovorum subsp. carotovorum (strain PC1).